The sequence spans 605 residues: Elongation factor 4 (605 aa).

One can recognise a tr-type G domain in the interval 11–193; sequence KNIRNFSIIA…TLVDVIPAPT (183 aa). Residues 23 to 28 and 140 to 143 each bind GTP; these read DHGKST and NKID.

This sequence belongs to the TRAFAC class translation factor GTPase superfamily. Classic translation factor GTPase family. LepA subfamily.

Its subcellular location is the cell inner membrane. The catalysed reaction is GTP + H2O = GDP + phosphate + H(+). Required for accurate and efficient protein synthesis under certain stress conditions. May act as a fidelity factor of the translation reaction, by catalyzing a one-codon backward translocation of tRNAs on improperly translocated ribosomes. Back-translocation proceeds from a post-translocation (POST) complex to a pre-translocation (PRE) complex, thus giving elongation factor G a second chance to translocate the tRNAs correctly. Binds to ribosomes in a GTP-dependent manner. In Acinetobacter baumannii (strain SDF), this protein is Elongation factor 4.